Consider the following 619-residue polypeptide: Long-chain fatty acid transport protein 6 (619 aa).

2 helical membrane-spanning segments follow: residues 22-42 (LLFP…RYGI) and 119-139 (VHVW…NSNL). 221-232 (YIFTSGTTGLPK) is a binding site for AMP.

Belongs to the ATP-dependent AMP-binding enzyme family.

It localises to the cell membrane. Its subcellular location is the sarcolemma. It catalyses the reaction a fatty acid(in) = a fatty acid(out). It carries out the reaction hexadecanoate(out) = hexadecanoate(in). The catalysed reaction is (9Z,12Z)-octadecadienoate(out) = (9Z,12Z)-octadecadienoate(in). The enzyme catalyses (9Z)-octadecenoate(out) = (9Z)-octadecenoate(in). It catalyses the reaction a very long-chain fatty acid + ATP + CoA = a very long-chain fatty acyl-CoA + AMP + diphosphate. It carries out the reaction tetracosanoate + ATP + CoA = tetracosanoyl-CoA + AMP + diphosphate. The catalysed reaction is a long-chain fatty acid + ATP + CoA = a long-chain fatty acyl-CoA + AMP + diphosphate. The enzyme catalyses (9Z)-octadecenoate + ATP + CoA = (9Z)-octadecenoyl-CoA + AMP + diphosphate. It catalyses the reaction (5Z,8Z,11Z,14Z)-eicosatetraenoate + ATP + CoA = (5Z,8Z,11Z,14Z)-eicosatetraenoyl-CoA + AMP + diphosphate. Its function is as follows. Mediates the import of long-chain fatty acids (LCFA) into the cell by facilitating their transport at the plasma membrane. Also functions as an acyl-CoA ligase catalyzing the ATP-dependent formation of fatty acyl-CoA using LCFA and very-long-chain fatty acids (VLCFA) as substrates. Plays a pivotal role in regulating available LCFA substrates from exogenous sources in tissues undergoing high levels of beta-oxidation such as the heart. The protein is Long-chain fatty acid transport protein 6 (Slc27a6) of Mus musculus (Mouse).